The primary structure comprises 267 residues: Probable tetrahydroxynaphthalene reductase MYCGRDRAFT_87994 (267 aa).

NADP(+)-binding residues include Ile26, Asp72, Asn99, and Arg132. Ser149 (proton donor) is an active-site residue. Positions 163, 167, 196, and 198 each coordinate NADP(+). Catalysis depends on Tyr163, which acts as the Proton acceptor. Residue Lys167 is the Lowers pKa of active site Tyr of the active site.

Belongs to the short-chain dehydrogenases/reductases (SDR) family. As to quaternary structure, homotetramer.

It carries out the reaction scytalone + NADP(+) = naphthalene-1,3,6,8-tetrol + NADPH + H(+). It participates in pigment biosynthesis; melanin biosynthesis. Its function is as follows. Probable tetrahydroxynaphthalene reductase; part of the gene cluster 29 that mediates the biosynthesis dihydroxynaphthalene (DHN)-melanin, a bluish-green pigment and a structural component of the conidial wall. Catalyzes the NADPH-dependent reduction of 1,3,6,8-tetrahydroxynaphthalene (T4HN) into (+)-scytalone. The chain is Probable tetrahydroxynaphthalene reductase MYCGRDRAFT_87994 from Zymoseptoria tritici (strain CBS 115943 / IPO323) (Speckled leaf blotch fungus).